The sequence spans 79 residues: RNA-binding protein KhpA (79 aa).

The KH domain occupies 32–79; sequence FLEYHLNLDQSDVGRVIGRKGRTISAIRTIVYSVPTEYKKVRIVIDEK.

Belongs to the KhpA RNA-binding protein family. Forms a complex with KhpB. KhpA and KhpB colocalize throughout the cell cycle, with some increase at midcell in dividing cells.

The protein resides in the cytoplasm. Functionally, a probable RNA chaperone. Forms a complex with KhpB which presumably binds to about 170 cellular RNAs (mRNA, tRNA intergenic RNA and sRNAs); the proteins alone each bind the same set of RNAs. A mutation in this gene suppresses the requirement for PBP2b (penA, a transpeptidase) in peripheral peptidoglycan (PG) synthesis. Probably plays a role in PG homeostasis and regulating peripheral PG synthesis. In Streptococcus pneumoniae serotype 2 (strain D39 / NCTC 7466), this protein is RNA-binding protein KhpA.